Reading from the N-terminus, the 216-residue chain is Protein Syd (216 aa).

It belongs to the Syd family.

It localises to the cell inner membrane. Functionally, interacts with the SecY protein in vivo. May bind preferentially to an uncomplexed state of SecY, thus functioning either as a chelating agent for excess SecY in the cell or as a regulatory factor that negatively controls the translocase function. This is Protein Syd from Shewanella sp. (strain W3-18-1).